We begin with the raw amino-acid sequence, 520 residues long: Serine protease Hip1 (520 aa).

The N-terminal stretch at 1–30 (MGMRLSRRDKIARMLLIWAALAAVALVLVG) is a signal peptide. Cys31 carries the N-palmitoyl cysteine lipid modification. Cys31 is lipidated: S-diacylglycerol cysteine. In terms of domain architecture, AB hydrolase-1 spans 102–497 (GSLVINPGGP…TQHTVVFQGD (396 aa)). Ser228 acts as the Nucleophile in catalysis. Asp463 is an active-site residue. The active-site Proton donor is His490.

This sequence belongs to the peptidase S33 family.

It is found in the cell envelope. Its subcellular location is the cell membrane. Its function is as follows. Serine protease that promotes pathogenesis by promoting the processing and the extracellular release of the M.bovis heat-shock protein GroEL2. In terms of biological role, key immunomodulatory virulence factor, which promotes survival in host macrophages and modulates host immune responses. The polypeptide is Serine protease Hip1 (Mycobacterium bovis (strain ATCC BAA-935 / AF2122/97)).